Consider the following 619-residue polypeptide: Dynein axonemal intermediate chain 2 (619 aa).

WD repeat units lie at residues 214 to 254 (KPSS…LVAE), 261 to 302 (SHRD…EPTE), 362 to 401 (GHHGPIYALQRNPFYPKNFLTVGDWAARIWSEESRESSIM), 405 to 445 (YHMA…CDPA), and 450 to 489 (VCDDPLFCLRVQDTGCLIACGSELGTTTLLEVSSSLSTLQ). The segment at 566-619 (EALKKKPKPKKASIEVEGEDELEDIAGEEEESGIIMGEDTGEDDMDEKNEGGAP) is disordered. Positions 581–597 (VEGEDELEDIAGEEEES) are enriched in acidic residues.

Belongs to the dynein intermediate chain family. As to quaternary structure, consists of at least two heavy chains and a number of intermediate and light chains. Interacts with DNAAF2. Interacts with DNAAF6/PIH1D3. Interacts with HEATR2; probably involved in outer arm dynein assembly. Interacts with CFAP53.

The protein localises to the cytoplasm. It localises to the cytoskeleton. The protein resides in the cilium axoneme. It is found in the dynein axonemal particle. Functionally, part of the dynein complex of respiratory cilia. In Rattus norvegicus (Rat), this protein is Dynein axonemal intermediate chain 2 (Dnai2).